A 66-amino-acid polypeptide reads, in one-letter code: Large ribosomal subunit protein bL33c (66 aa).

This sequence belongs to the bacterial ribosomal protein bL33 family.

It localises to the plastid. It is found in the chloroplast. This chain is Large ribosomal subunit protein bL33c, found in Arabis hirsuta (Hairy rock-cress).